Consider the following 1138-residue polypeptide: Lysylphosphatidylglycerol biosynthesis bifunctional protein LysX (1138 aa).

Over residues 1–15 the composition is skewed to polar residues; the sequence is MALDTPSSDLPVSTD. Positions 1–34 are disordered; that stretch reads MALDTPSSDLPVSTDDTAEHQPTPAHRPPSAADR. Positions 1–646 are phosphatidylglycerol lysyltransferase; the sequence is MALDTPSSDL…LIAQLESEED (646 aa). 6 helical membrane passes run 56-76, 92-112, 119-139, 155-175, 190-210, and 247-267; these read IAGTVVGVLAGIALLSSIFPL, IVSLPNTSLAWAFVLALVAIA, IAWWIATIYLVLFMVSNALLL, IQIWIGLGIDAAALIFLIVTY, ALGVLIVGLTAATLVGWGLVW, and IVIDSALGLLGALALIAAATV. The tract at residues 647–1138 is lysine--tRNA ligase; sequence RTAVEVHRPE…AFPMVKPTDA (492 aa). The OB DNA-binding region spans 698–772; it reads VTIAGRVTKM…GELSVLIDAW (75 aa). 2 residues coordinate Mg(2+): aspartate 1048 and glutamate 1055.

In the N-terminal section; belongs to the LPG synthetase family. It in the C-terminal section; belongs to the class-II aminoacyl-tRNA synthetase family. Mg(2+) serves as cofactor.

It is found in the cell membrane. It catalyses the reaction tRNA(Lys) + L-lysine + ATP = L-lysyl-tRNA(Lys) + AMP + diphosphate. The enzyme catalyses L-lysyl-tRNA(Lys) + a 1,2-diacyl-sn-glycero-3-phospho-(1'-sn-glycerol) = a 1,2-diacyl-sn-glycero-3-phospho-1'-(3'-O-L-lysyl)-sn-glycerol + tRNA(Lys). Catalyzes the production of L-lysyl-tRNA(Lys)transfer and the transfer of a lysyl group from L-lysyl-tRNA(Lys) to membrane-bound phosphatidylglycerol (PG), which produces lysylphosphatidylglycerol (LPG), one of the components of the bacterial membrane with a positive net charge. LPG synthesis contributes to the resistance to cationic antimicrobial peptides (CAMPs) and likely protects M.tuberculosis against the CAMPs produced by competiting microorganisms (bacteriocins). In fact, the modification of anionic phosphatidylglycerol with positively charged L-lysine results in repulsion of the peptides. The chain is Lysylphosphatidylglycerol biosynthesis bifunctional protein LysX (lysX) from Gordonia bronchialis (strain ATCC 25592 / DSM 43247 / BCRC 13721 / JCM 3198 / KCTC 3076 / NBRC 16047 / NCTC 10667) (Rhodococcus bronchialis).